The following is a 732-amino-acid chain: MTTESKCPFSGGGKPNTPRRGPSNQDWWPNQLSLKPLHQHSSLSDPMDPDFDYAKAFNSLDLAAVKQDLHALMTDSQEWWPADFGHYGGLFIRMAWHSAGTYRIGDGRGGAGEGQQRFAPLNSWPDNVSLDKARRLLWPIKQKYGRKISWADLIVLTGNVALESMGFKTFGYAGGRADTWEPDDVYWGSEKIWLELSGGQNSRYSGDRDLEDPLAAVQMGLIYVNPEGPDGNPDPVAAARDIRETFARMAMNDEETVALIAGGHTFGKTHGAGPASHVGDDPETAGLERQGLGWQSSFGTGKGKDAITSGLEVTWTTTPTQWNHDFFKHLFEYEWELTQSPAGAHQWVAKDVGETIPDAFDPAKKQRPTMLTTDLSLRFDPAYEKISRRFYEHPDQLADAFSRAWYKLTHRDMGPRARYLGPEVPAEELIWQDPIPAVDHQLINDQDIADLKTSILTSGLPISVLVSTAWASASTFRGSDKRGGANGARIRLAPQKDWAINQPAQLAQTLAKLEDIQQAFNNAQSGNKRVSLADLIVLAGAAAVEQAAANAGHPVSVPFTPGRMDATQEQTDVDSFEAMEPVADGFRNYLERQFNIPAEALLVDKAQLLTLTAPEMTVLVGGLRVLNANVGQSQHGVLTQRPQALSNDFFVNLLDMGTTWKAAGEDGVFEGQDSQTGALKWTATRADLIFGSHSQLRALAEVYGSSDAQASFVYDFVAAWNKVMNLDRFDLA.

A disordered region spans residues 1 to 29; the sequence is MTTESKCPFSGGGKPNTPRRGPSNQDWWP. A cross-link (tryptophyl-tyrosyl-methioninium (Trp-Tyr) (with M-249)) is located at residues 96–223; that stretch reads WHSAGTYRIG…LAAVQMGLIY (128 aa). The Proton acceptor role is filled by His97. Positions 223-249 form a cross-link, tryptophyl-tyrosyl-methioninium (Tyr-Met) (with W-96); it reads YVNPEGPDGNPDPVAAARDIRETFARM. His264 is a heme b binding site.

The protein belongs to the peroxidase family. Peroxidase/catalase subfamily. Homodimer or homotetramer. Heme b serves as cofactor. Formation of the three residue Trp-Tyr-Met cross-link is important for the catalase, but not the peroxidase activity of the enzyme.

The catalysed reaction is H2O2 + AH2 = A + 2 H2O. The enzyme catalyses 2 H2O2 = O2 + 2 H2O. In terms of biological role, bifunctional enzyme with both catalase and broad-spectrum peroxidase activity. In Serratia proteamaculans (strain 568), this protein is Catalase-peroxidase.